We begin with the raw amino-acid sequence, 211 residues long: N-(5'-phosphoribosyl)anthranilate isomerase (211 aa).

It belongs to the TrpF family.

It catalyses the reaction N-(5-phospho-beta-D-ribosyl)anthranilate = 1-(2-carboxyphenylamino)-1-deoxy-D-ribulose 5-phosphate. It participates in amino-acid biosynthesis; L-tryptophan biosynthesis; L-tryptophan from chorismate: step 3/5. In Chromohalobacter salexigens (strain ATCC BAA-138 / DSM 3043 / CIP 106854 / NCIMB 13768 / 1H11), this protein is N-(5'-phosphoribosyl)anthranilate isomerase.